We begin with the raw amino-acid sequence, 601 residues long: MAKLDKIRNFSIIAHIDHGKSTLADRILEITGMVSEREKKDQYLDKMELEQERGITIKAQTVRIPYKANDGEEYILNLIDTPGHVDFSYEVSRSLAASEGALLVVDSTQGVEAQTLANVFLALDHDLEIVPVLNKVDLPSSDCERVAQEIEEVIGLDCSEPLMISAKTGLNVEDVLESIVKDLPAPQGDPDAPLKALIFDSWYDSYQGVVVLFRILDGTIKKGDKIQIHSTGRTFDVTTLGVYTPEPQKAKELAAGEVGFLCASMKELNDAPVGDTITLAADPVEDPFPGFQEVKPMVFCGLYPVEPAEYEPLKAALEKLQLNDTAFSFEPETSTALGFGFRCGFLGLLHMEIIQERLEREFQAKLIATAPSVVYQARLNNGEVLEIDNPSKMPDGGDLESLAEPFCRLEIHVPNDYVGAVLKLCEEKRGIQKDMRYLTSSRVIITYEVPFAEIMYDFFDKLKSHTKGYASLDYEIIDYRESNLVKLDILINTDPVDAFSAIVHKDSAYPFGRSLALKLKRAIPRQMFEIVIQAAIGRKIIAKERVAPFRKNVTAKCYGGDITRKRKLLEKQKEGKKRMKKMGNVEIPQEAFMAVLKAGED.

Positions 5 to 187 (DKIRNFSIIA…SIVKDLPAPQ (183 aa)) constitute a tr-type G domain. Residues 17 to 22 (DHGKST) and 134 to 137 (NKVD) each bind GTP.

The protein belongs to the TRAFAC class translation factor GTPase superfamily. Classic translation factor GTPase family. LepA subfamily.

The protein resides in the cell inner membrane. It catalyses the reaction GTP + H2O = GDP + phosphate + H(+). In terms of biological role, required for accurate and efficient protein synthesis under certain stress conditions. May act as a fidelity factor of the translation reaction, by catalyzing a one-codon backward translocation of tRNAs on improperly translocated ribosomes. Back-translocation proceeds from a post-translocation (POST) complex to a pre-translocation (PRE) complex, thus giving elongation factor G a second chance to translocate the tRNAs correctly. Binds to ribosomes in a GTP-dependent manner. In Maridesulfovibrio salexigens (strain ATCC 14822 / DSM 2638 / NCIMB 8403 / VKM B-1763) (Desulfovibrio salexigens), this protein is Elongation factor 4.